A 689-amino-acid chain; its full sequence is DNA topoisomerase 1 (689 aa).

The Toprim domain maps to Asp3–Ile113. Positions 9 and 82 each coordinate Mg(2+). The Topo IA-type catalytic domain maps to Glu129–Glu557. The interval Ser163–Gln168 is interaction with DNA. Tyr298 acts as the O-(5'-phospho-DNA)-tyrosine intermediate in catalysis. The segment at Ser328 to Asp356 is disordered. C4-type zinc fingers lie at residues Cys577–Cys603, Cys617–Cys645, and Cys658–Cys681.

The protein belongs to the type IA topoisomerase family. In terms of assembly, monomer. It depends on Mg(2+) as a cofactor.

The catalysed reaction is ATP-independent breakage of single-stranded DNA, followed by passage and rejoining.. Functionally, releases the supercoiling and torsional tension of DNA, which is introduced during the DNA replication and transcription, by transiently cleaving and rejoining one strand of the DNA duplex. Introduces a single-strand break via transesterification at a target site in duplex DNA. The scissile phosphodiester is attacked by the catalytic tyrosine of the enzyme, resulting in the formation of a DNA-(5'-phosphotyrosyl)-enzyme intermediate and the expulsion of a 3'-OH DNA strand. The free DNA strand then undergoes passage around the unbroken strand, thus removing DNA supercoils. Finally, in the religation step, the DNA 3'-OH attacks the covalent intermediate to expel the active-site tyrosine and restore the DNA phosphodiester backbone. In Staphylococcus aureus (strain USA300), this protein is DNA topoisomerase 1.